Consider the following 303-residue polypeptide: UDP-3-O-acyl-N-acetylglucosamine deacetylase (303 aa).

Zn(2+) is bound by residues H78, H237, and D241. The Proton donor role is filled by H264.

It belongs to the LpxC family. Requires Zn(2+) as cofactor.

The catalysed reaction is a UDP-3-O-[(3R)-3-hydroxyacyl]-N-acetyl-alpha-D-glucosamine + H2O = a UDP-3-O-[(3R)-3-hydroxyacyl]-alpha-D-glucosamine + acetate. It participates in glycolipid biosynthesis; lipid IV(A) biosynthesis; lipid IV(A) from (3R)-3-hydroxytetradecanoyl-[acyl-carrier-protein] and UDP-N-acetyl-alpha-D-glucosamine: step 2/6. Functionally, catalyzes the hydrolysis of UDP-3-O-myristoyl-N-acetylglucosamine to form UDP-3-O-myristoylglucosamine and acetate, the committed step in lipid A biosynthesis. This chain is UDP-3-O-acyl-N-acetylglucosamine deacetylase, found in Pseudomonas savastanoi pv. phaseolicola (strain 1448A / Race 6) (Pseudomonas syringae pv. phaseolicola (strain 1448A / Race 6)).